Reading from the N-terminus, the 570-residue chain is Chaperonin GroEL 1 (570 aa).

ATP is bound by residues 42-45 (TLGP), K63, 99-103 (DGTTT), G427, and D507. A disordered region spans residues 537 to 570 (EDEDDDDGGGGGGGGMPAGGAGGMGGMGGMGGMM). The segment covering 545-570 (GGGGGGGMPAGGAGGMGGMGGMGGMM) has biased composition (gly residues).

The protein belongs to the chaperonin (HSP60) family. In terms of assembly, forms a cylinder of 14 subunits composed of two heptameric rings stacked back-to-back. Interacts with the co-chaperonin GroES.

The protein localises to the cytoplasm. The catalysed reaction is ATP + H2O + a folded polypeptide = ADP + phosphate + an unfolded polypeptide.. Functionally, together with its co-chaperonin GroES, plays an essential role in assisting protein folding. The GroEL-GroES system forms a nano-cage that allows encapsulation of the non-native substrate proteins and provides a physical environment optimized to promote and accelerate protein folding. In Salinibacter ruber (strain DSM 13855 / M31), this protein is Chaperonin GroEL 1.